Here is a 206-residue protein sequence, read N- to C-terminus: Small ribosomal subunit protein uS4 (206 aa).

Residues 96–168 (SRLDNVVYRM…LELAEQREKP (73 aa)) enclose the S4 RNA-binding domain.

The protein belongs to the universal ribosomal protein uS4 family. Part of the 30S ribosomal subunit. Contacts protein S5. The interaction surface between S4 and S5 is involved in control of translational fidelity.

Functionally, one of the primary rRNA binding proteins, it binds directly to 16S rRNA where it nucleates assembly of the body of the 30S subunit. With S5 and S12 plays an important role in translational accuracy. The polypeptide is Small ribosomal subunit protein uS4 (Baumannia cicadellinicola subsp. Homalodisca coagulata).